The primary structure comprises 61 residues: Large ribosomal subunit protein uL30 (61 aa).

It belongs to the universal ribosomal protein uL30 family. In terms of assembly, part of the 50S ribosomal subunit.

The polypeptide is Large ribosomal subunit protein uL30 (Shewanella piezotolerans (strain WP3 / JCM 13877)).